We begin with the raw amino-acid sequence, 111 residues long: Large ribosomal subunit protein uL22 (111 aa).

It belongs to the universal ribosomal protein uL22 family. Part of the 50S ribosomal subunit.

Functionally, this protein binds specifically to 23S rRNA; its binding is stimulated by other ribosomal proteins, e.g. L4, L17, and L20. It is important during the early stages of 50S assembly. It makes multiple contacts with different domains of the 23S rRNA in the assembled 50S subunit and ribosome. Its function is as follows. The globular domain of the protein is located near the polypeptide exit tunnel on the outside of the subunit, while an extended beta-hairpin is found that lines the wall of the exit tunnel in the center of the 70S ribosome. This Acholeplasma laidlawii (strain PG-8A) protein is Large ribosomal subunit protein uL22.